The sequence spans 134 residues: Putative STAG3-like protein 2 (134 aa).

Positions Pro-10–Met-95 constitute an SCD domain.

It belongs to the SCC3 family.

The protein resides in the nucleus. In Homo sapiens (Human), this protein is Putative STAG3-like protein 2 (STAG3L2).